We begin with the raw amino-acid sequence, 125 residues long: uncharacterized protein (125 aa).

The chain crosses the membrane as a helical span at residues 10–26; that stretch reads IIILVCLMFLAIMVYIY.

The protein localises to the membrane. This is an uncharacterized protein from Rickettsia prowazekii (strain Madrid E).